A 336-amino-acid chain; its full sequence is Zinc finger protein GFI1 homolog pag-3 (336 aa).

C2H2-type zinc fingers lie at residues 126–148 (FHCQ…QQVH), 154–176 (FECK…LLIH), 182–204 (YPCE…TYIH), 210–232 (HKCT…TRKH), and 238–260 (FACD…RESH). Positions 253-290 (RRRHRESHHPGHPEECVSASQISSDLSPKGYMTPPTSN) are disordered.

As to quaternary structure, may interact with transcription factor unc-3. As to expression, expressed in the BDU neurons, the touch neurons, the VA, VB and VC motor neurons, two AVF interneurons and unidentified neurons of the retrovesicular ganglion (at protein level).

The protein resides in the nucleus. It is found in the cell projection. Its subcellular location is the axon. It localises to the perikaryon. Functionally, transcription factor. Plays a role in the determination of neuroblast cell fate and neuronal differentiation. Negatively modulates expression of several components of dense-core vesicles (DCVs), thereby, in a DCV membrane protein ida-1-dependent manner, regulating neurosecretion. Negatively modulates the transcription of its own gene, the mechanosensory gene mec-3, and also other touch neuron-specific genes in the BDU neurons; required for coordinated movement. Required to determine the identity of BDU sensory neurons in concert with transcription factor unc-86, regulating expression of a number of genes, including transcription factors ceh-14 and ahr-1, neuropeptides flp-10, nlp-1 and nlp-15, and tyramine receptor-encoding ser-2. Acts in concert with non-canonical WNT signaling to negatively modulate transcription of mec-3 gene in BDU neurons. May act in concert with transcription factor unc-3 in motor neuron fate determination. May play a role programmed cell death. This is Zinc finger protein GFI1 homolog pag-3 from Caenorhabditis elegans.